The primary structure comprises 267 residues: MSNKVHLGHTARKRFGQNFLTDGNVINRIVGAIAPDNDHVMVEIGPGLGALTEPVANGIDKLTVVELDKDLVERLKEHPTLKHKLDIHQGDALKFDFSQLVEEGRQMKVFGNLPYNISTPLMFHLFEFAEQIENMHFMLQKEVVLRLSASPGTKAYGRLTVMAQYHCQVMPVLEVPPHSFTPAPKVDSAVVRLVPYKTKPWPCKDVDQLRHLTTTAFNMRRKTLRNNLKHMISDEEFAALGIDATLRPEQITVQQYVAMANLVIDKK.

Residues asparagine 18, leucine 20, glycine 45, glutamate 66, aspartate 91, and asparagine 112 each coordinate S-adenosyl-L-methionine.

Belongs to the class I-like SAM-binding methyltransferase superfamily. rRNA adenine N(6)-methyltransferase family. RsmA subfamily.

It localises to the cytoplasm. The enzyme catalyses adenosine(1518)/adenosine(1519) in 16S rRNA + 4 S-adenosyl-L-methionine = N(6)-dimethyladenosine(1518)/N(6)-dimethyladenosine(1519) in 16S rRNA + 4 S-adenosyl-L-homocysteine + 4 H(+). Its function is as follows. Specifically dimethylates two adjacent adenosines (A1518 and A1519) in the loop of a conserved hairpin near the 3'-end of 16S rRNA in the 30S particle. May play a critical role in biogenesis of 30S subunits. The chain is Ribosomal RNA small subunit methyltransferase A from Shewanella sediminis (strain HAW-EB3).